A 1247-amino-acid chain; its full sequence is Probable phosphorylase b kinase regulatory subunit alpha (1247 aa).

A calmodulin-binding region spans residues 853-883 (LKGLYEKACQQKLWGLVRHTAGMLGKRVEDL). Residues S1030 and S1033 each carry the phosphoserine modification. The tract at residues 1052–1089 (DRQGQWLRRRRLDGALNRVPRDFYSRVWTVLEKCQGLA) is calmodulin-binding. The S-farnesyl cysteine moiety is linked to residue C1244.

It belongs to the phosphorylase b kinase regulatory chain family. In terms of processing, although the final Cys may be farnesylated, the terminal tripeptide is probably not removed, and the C-terminus is not methylated.

Its subcellular location is the cell membrane. It functions in the pathway glycan biosynthesis; glycogen metabolism. Its function is as follows. Phosphorylase b kinase catalyzes the phosphorylation of serine in certain substrates, including troponin I. The alpha chain may bind calmodulin. This is Probable phosphorylase b kinase regulatory subunit alpha from Drosophila melanogaster (Fruit fly).